The following is a 123-amino-acid chain: Secreted RxLR effector protein RXLR-C21 (123 aa).

The first 23 residues, 1–23 (MRLHLLVLSVIVVSLLVSDNAHA), serve as a signal peptide directing secretion. A RxLR-dEER motif is present at residues 32 to 65 (RALRETPINGLVTNQLAVSRNLTPAKFITNSEER). Residues 101-121 (VTTICSIVLFVMVFGCLYKIF) traverse the membrane as a helical segment.

The protein belongs to the RxLR effector family.

It is found in the secreted. Its subcellular location is the host endoplasmic reticulum membrane. In terms of biological role, secreted effector that does not suppress pattern-triggered immunity (PTI) in plant host. The chain is Secreted RxLR effector protein RXLR-C21 from Plasmopara halstedii (Downy mildew of sunflower).